Reading from the N-terminus, the 456-residue chain is Coenzyme F420 hydrogenase subunit alpha (456 aa).

Cysteine 63, cysteine 66, cysteine 432, and cysteine 435 together coordinate Ni(2+).

It belongs to the [NiFe]/[NiFeSe] hydrogenase large subunit family. As to quaternary structure, pentamer of two alpha chains, two beta chains and a gamma chain. Ni(2+) is required as a cofactor. It depends on iron-sulfur cluster as a cofactor. FAD serves as cofactor.

It is found in the cell membrane. The catalysed reaction is oxidized coenzyme F420-(gamma-L-Glu)(n) + H2 + H(+) = reduced coenzyme F420-(gamma-L-Glu)(n). Functionally, reduces the physiological low-potential two-electron acceptor coenzyme F420, and the artificial one-electron acceptor methylviologen. The protein is Coenzyme F420 hydrogenase subunit alpha (frhA) of Methanosarcina barkeri (strain Fusaro / DSM 804).